The following is a 388-amino-acid chain: Trans-enoyl reductase tenC (388 aa).

51-54 serves as a coordination point for NADP(+); it reads VDGK. 142–149 contributes to the substrate binding site; sequence VGVASVGM. Residues 219–222, Tyr237, and 284–285 contribute to the NADP(+) site; these read SSES and LD. Residue 304 to 308 participates in substrate binding; it reads SFTQF. 373-374 is an NADP(+) binding site; that stretch reads IK.

Belongs to the zinc-containing alcohol dehydrogenase family. As to quaternary structure, monomer.

It participates in secondary metabolite biosynthesis. In terms of biological role, trans-enoyl reductase; part of the gene cluster that mediates the biosynthesis of tenellin-type 2-pyridones, iron-chelating compounds involved in iron stress tolerance, competition with the natural competitor fungus Metarhizium robertsii and insect hosts infection. TenC collaborates with the hybrid PKS-NRPS synthetase tenS to catalyze the assembly of the polyketide-amino acid backbone, since tenS lacks a designated enoylreductase (ER) domain. Upon formation of the polyketide backbone on the thiotemplate of tenS, the triketide is transferred to the NRPS module and linked to tyrosine to produce the pyrrolidine-2-dione intermediates, including pretellinin A, 11-hydropretellenin A, 12-hydropretellenin A, 13-hydropretellenin A, 14-hydropretellenin A, 12-oxopretellenin A and prototellinin D. The pathway begins with the assembly of the polyketide-amino acid backbone by the hybrid PKS-NRPS tenS with the help of the enoyl reductase tenC. These enzymes catalyze the synthesis of the pyrrolidine-2-dione intermediates pretellinin A, 11-hydropretellenin A, 12-hydropretellenin A, 13-hydropretellenin A, 14-hydropretellenin A, 12-oxopretellenin A and prototellinin D. The cytochrome P450 monooxygenase tenA then catalyzes an oxidative ring expansion of pretenellin A and 14-hydropretellenin A to form the 2-pyridone core, leading to pretenellin B and pyridovericin, respectively. The cytochrome P450 monooxygenase tenB is then required for the selective N-hydroxylation of the 2-pyridone nitrogen of yield tellinin and 15-hydroxytellenin (15-HT), respectively. The UDP-glucosyltransferase GT1 and the methyltransferase MT1, located outside the tenS gene cluster, contribute to the stepwise glycosylation and methylation of 15-HT to obtain the glycoside pyridovericin-N-O-(4-O-methyl-beta-D-glucopyranoside) (PMGP). Additional related compounds such as 1-O-methyl-15-HT, (8Z)-1-O-methyl-15-HT, and O-methyltenellin A are also produced but the enzymes involved in their biosynthesis have still to be determined. The sequence is that of Trans-enoyl reductase tenC from Beauveria bassiana (White muscardine disease fungus).